A 317-amino-acid polypeptide reads, in one-letter code: Apolipoprotein E (317 aa).

Positions 1–18 (MKVLWAALLVTFLAGCQA) are cleaved as a signal peptide. 8 repeat units span residues 80 to 101 (TLMD…EQLS), 102 to 123 (PVAE…ARLG), 124 to 145 (ADME…AMLG), 146 to 167 (QSTE…KRLL), 168 to 189 (RDAD…EGAE), 190 to 211 (RGVS…VRAA), 212 to 233 (TVGS…ERLR), and 234 to 255 (ARME…EQVA). The tract at residues 80-255 (TLMDETMKEL…RLDEVKEQVA (176 aa)) is 8 X 22 AA approximate tandem repeats. A Methionine sulfoxide modification is found at methionine 143. Serine 147 is subject to Phosphoserine. Residues 158 to 168 (HLRKLRKRLLR) are LDL and other lipoprotein receptors binding. 162–165 (LRKR) provides a ligand contact to heparin. The segment at 210-290 (AATVGSLASQ…SWFEPLVEDM (81 aa)) is lipid-binding and lipoprotein association. 229–236 (GERLRARM) lines the heparin pocket. Residues 266 to 317 (QQISLQAEAFQARLKSWFEPLVEDMQRQWAGLVEKVQAAVGASTAPVPSDNH) are homooligomerization. The specificity for association with VLDL stretch occupies residues 278 to 290 (RLKSWFEPLVEDM).

This sequence belongs to the apolipoprotein A1/A4/E family. As to quaternary structure, homotetramer. May interact with ABCA1; functionally associated with ABCA1 in the biogenesis of HDLs. May interact with APP/A4 amyloid-beta peptide; the interaction is extremely stable in vitro but its physiological significance is unclear. May interact with MAPT. May interact with MAP2. In the cerebrospinal fluid, interacts with secreted SORL1. Interacts with PMEL; this allows the loading of PMEL luminal fragment on ILVs to induce fibril nucleation. Post-translationally, APOE exists as multiple glycosylated and sialylated glycoforms within cells and in plasma. The extent of glycosylation and sialylation are tissue and context specific. Glycated in plasma VLDL. In terms of processing, phosphorylated by FAM20C in the extracellular medium.

Its subcellular location is the secreted. The protein resides in the extracellular space. The protein localises to the extracellular matrix. It localises to the extracellular vesicle. It is found in the endosome. Its subcellular location is the multivesicular body. Its function is as follows. APOE is an apolipoprotein, a protein associating with lipid particles, that mainly functions in lipoprotein-mediated lipid transport between organs via the plasma and interstitial fluids. APOE is a core component of plasma lipoproteins and is involved in their production, conversion and clearance. Apolipoproteins are amphipathic molecules that interact both with lipids of the lipoprotein particle core and the aqueous environment of the plasma. As such, APOE associates with chylomicrons, chylomicron remnants, very low density lipoproteins (VLDL) and intermediate density lipoproteins (IDL) but shows a preferential binding to high-density lipoproteins (HDL). It also binds a wide range of cellular receptors including the LDL receptor/LDLR, the LDL receptor-related proteins LRP1, LRP2 and LRP8 and the very low-density lipoprotein receptor/VLDLR that mediate the cellular uptake of the APOE-containing lipoprotein particles. Finally, APOE also has a heparin-binding activity and binds heparan-sulfate proteoglycans on the surface of cells, a property that supports the capture and the receptor-mediated uptake of APOE-containing lipoproteins by cells. A main function of APOE is to mediate lipoprotein clearance through the uptake of chylomicrons, VLDLs, and HDLs by hepatocytes. APOE is also involved in the biosynthesis by the liver of VLDLs as well as their uptake by peripheral tissues ensuring the delivery of triglycerides and energy storage in muscle, heart and adipose tissues. By participating in the lipoprotein-mediated distribution of lipids among tissues, APOE plays a critical role in plasma and tissues lipid homeostasis. APOE is also involved in two steps of reverse cholesterol transport, the HDLs-mediated transport of cholesterol from peripheral tissues to the liver, and thereby plays an important role in cholesterol homeostasis. First, it is functionally associated with ABCA1 in the biogenesis of HDLs in tissues. Second, it is enriched in circulating HDLs and mediates their uptake by hepatocytes. APOE also plays an important role in lipid transport in the central nervous system, regulating neuron survival and sprouting. The protein is Apolipoprotein E (APOE) of Theropithecus gelada (Gelada baboon).